The following is a 704-amino-acid chain: Plasma membrane ATPase 2 (704 aa).

A helical transmembrane segment spans residues 1-16 (CSIAVGMIIEIIVMYP). Over 17 to 26 (IQHRKYRPGI) the chain is Extracellular. The chain crosses the membrane as a helical span at residues 27-48 (DNLLVLLIGGIPIAMPTVLSVT). Over 49–395 (MAIGSHRLAQ…TSRAIFQRMK (347 aa)) the chain is Cytoplasmic. The active-site 4-aspartylphosphate intermediate is the aspartate 81. Mg(2+) is bound by residues aspartate 340 and aspartate 344. A helical transmembrane segment spans residues 396 to 417 (NYTIYAVSITIRIVLGFMLLAL). Topologically, residues 418 to 422 (IWKFD) are extracellular. A helical membrane pass occupies residues 423-445 (FPPFMVLIIAILNDGTIMTISKD). Over 446–461 (RVKPSPLPDSWKLAEI) the chain is Cytoplasmic. Residues 462–482 (FTTGVVLGGYLAMMTVIFFWA) form a helical membrane-spanning segment. Residues 483 to 507 (AYETQFFPRVFGVSTLQRTATDDFR) lie on the Extracellular side of the membrane. Residues 508 to 528 (KLASAIYLQVSTISQALIFVT) traverse the membrane as a helical segment. Topologically, residues 529 to 540 (RSRSWSFVERPG) are cytoplasmic. Residues 541–561 (LLLVVALIVAQLVATLIAVYA) form a helical membrane-spanning segment. Residues 562–570 (SWSFAAIEG) lie on the Extracellular side of the membrane. The chain crosses the membrane as a helical span at residues 571–591 (IGWGWAGVIWLYNLVFYFPLD). At 592-704 (IIKFLIRYAL…IETIQQSYTV (113 aa)) the chain is on the cytoplasmic side.

It belongs to the cation transport ATPase (P-type) (TC 3.A.3) family. Type IIIA subfamily. In terms of assembly, possibly exists as a homodimer or a homotrimer.

It localises to the cell membrane. The enzyme catalyses ATP + H2O + H(+)(in) = ADP + phosphate + 2 H(+)(out). Functionally, the plasma membrane ATPase of plants and fungi is a hydrogen ion pump. The proton gradient it generates drives the active transport of nutrients by H(+)-symport. The resulting external acidification and/or internal alkinization may mediate growth responses. The sequence is that of Plasma membrane ATPase 2 (LHA2) from Solanum lycopersicum (Tomato).